The following is a 326-amino-acid chain: Putative ribose-phosphate pyrophosphokinase 2 (326 aa).

ATP-binding positions include 43–45 and 102–103; these read DGE and RQ. A Mg(2+)-binding site is contributed by His-136. Residues Asp-226 and 230–234 contribute to the D-ribose 5-phosphate site; that span reads NTGKT.

This sequence belongs to the ribose-phosphate pyrophosphokinase family. Class I subfamily. Homohexamer. The cofactor is Mg(2+).

Its subcellular location is the cytoplasm. It carries out the reaction D-ribose 5-phosphate + ATP = 5-phospho-alpha-D-ribose 1-diphosphate + AMP + H(+). The protein operates within metabolic intermediate biosynthesis; 5-phospho-alpha-D-ribose 1-diphosphate biosynthesis; 5-phospho-alpha-D-ribose 1-diphosphate from D-ribose 5-phosphate (route I): step 1/1. Functionally, involved in the biosynthesis of the central metabolite phospho-alpha-D-ribosyl-1-pyrophosphate (PRPP) via the transfer of pyrophosphoryl group from ATP to 1-hydroxyl of ribose-5-phosphate (Rib-5-P). In Streptococcus mutans serotype c (strain ATCC 700610 / UA159), this protein is Putative ribose-phosphate pyrophosphokinase 2.